Here is a 510-residue protein sequence, read N- to C-terminus: tRNA-2-methylthio-N(6)-dimethylallyladenosine synthase (510 aa).

The MTTase N-terminal domain maps to 19-144 (RTYQVRTFGC…LPVLLERARH (126 aa)). Residues Cys-28, Cys-73, Cys-107, Cys-181, Cys-185, and Cys-188 each coordinate [4Fe-4S] cluster. The Radical SAM core domain maps to 167–397 (RESPYAAWVS…TALQDRITYE (231 aa)). One can recognise a TRAM domain in the interval 400–470 (QAQTGRTLEV…PHYLEADDVS (71 aa)). Residues 482 to 492 (AWEARQARPEP) are compositionally biased toward basic and acidic residues. Positions 482-510 (AWEARQARPEPESTGPRPVGLGLPTLRRA) are disordered.

The protein belongs to the methylthiotransferase family. MiaB subfamily. In terms of assembly, monomer. [4Fe-4S] cluster serves as cofactor.

The protein localises to the cytoplasm. It catalyses the reaction N(6)-dimethylallyladenosine(37) in tRNA + (sulfur carrier)-SH + AH2 + 2 S-adenosyl-L-methionine = 2-methylsulfanyl-N(6)-dimethylallyladenosine(37) in tRNA + (sulfur carrier)-H + 5'-deoxyadenosine + L-methionine + A + S-adenosyl-L-homocysteine + 2 H(+). Its function is as follows. Catalyzes the methylthiolation of N6-(dimethylallyl)adenosine (i(6)A), leading to the formation of 2-methylthio-N6-(dimethylallyl)adenosine (ms(2)i(6)A) at position 37 in tRNAs that read codons beginning with uridine. The polypeptide is tRNA-2-methylthio-N(6)-dimethylallyladenosine synthase (Kineococcus radiotolerans (strain ATCC BAA-149 / DSM 14245 / SRS30216)).